A 360-amino-acid polypeptide reads, in one-letter code: MLTWLAEFAVYFTPLNLFRYITFRTGGAIATALFFVFFFGPNIIKSLRIKQGKGQPIRSDGPQSHLLTKKGTPTMGGLMILSGLFVSTLLWANLSNHYVWVVLWVMLGYGAIGFYDDYLKVTKQTHNGFSGRGRLACEAGVALVACIAMMKLGTPHMTSLAFPAVNGYVVDLGLFFLIFGPFVIVASGNAVNLTDGLDGLAIVPVMIAAGTFGIIAYLVGNAIYSDYLRINFVPGAGELAVVSGAVIGAGLGFLWFNAPPAQIFMGDTGSLALGGLLGTIAVAIKHEMVLAIVGGLFALETLSVIVQVVSFKLTGKRVFKMAPIHHHFEQLGWSEPQVVVRFWIIAFVLALVGLSTLKLR.

10 helical membrane passes run 27-47, 72-92, 94-114, 135-155, 167-187, 199-219, 236-256, 263-283, 289-309, and 337-357; these read GAIA…IKSL, TPTM…LLWA, LSNH…AIGF, LACE…LGTP, GYVV…IVAS, GLAI…AYLV, AGEL…FLWF, IFMG…IAVA, VLAI…VQVV, and QVVV…LSTL.

This sequence belongs to the glycosyltransferase 4 family. MraY subfamily. The cofactor is Mg(2+).

It localises to the cell inner membrane. It carries out the reaction UDP-N-acetyl-alpha-D-muramoyl-L-alanyl-gamma-D-glutamyl-meso-2,6-diaminopimeloyl-D-alanyl-D-alanine + di-trans,octa-cis-undecaprenyl phosphate = di-trans,octa-cis-undecaprenyl diphospho-N-acetyl-alpha-D-muramoyl-L-alanyl-D-glutamyl-meso-2,6-diaminopimeloyl-D-alanyl-D-alanine + UMP. It functions in the pathway cell wall biogenesis; peptidoglycan biosynthesis. Catalyzes the initial step of the lipid cycle reactions in the biosynthesis of the cell wall peptidoglycan: transfers peptidoglycan precursor phospho-MurNAc-pentapeptide from UDP-MurNAc-pentapeptide onto the lipid carrier undecaprenyl phosphate, yielding undecaprenyl-pyrophosphoryl-MurNAc-pentapeptide, known as lipid I. The chain is Phospho-N-acetylmuramoyl-pentapeptide-transferase from Beijerinckia indica subsp. indica (strain ATCC 9039 / DSM 1715 / NCIMB 8712).